The primary structure comprises 149 residues: MDEQEAVFMIERIYVKDISFESPNAPLSFVQTEAPTVDVGLNTASTVVEGMEGLTEVTLTVTVKAKAGESTYFAVEVQQSGLFRVQNIPEEHMPALLAVHCPTILFPYAREVVADLVGRGGFQPLHLHPVNFEALYQQAQTQQQNYTTQ.

Belongs to the SecB family. Homotetramer, a dimer of dimers. One homotetramer interacts with 1 SecA dimer.

Its subcellular location is the cytoplasm. Its function is as follows. One of the proteins required for the normal export of preproteins out of the cell cytoplasm. It is a molecular chaperone that binds to a subset of precursor proteins, maintaining them in a translocation-competent state. It also specifically binds to its receptor SecA. This Acidithiobacillus ferrooxidans (strain ATCC 23270 / DSM 14882 / CIP 104768 / NCIMB 8455) (Ferrobacillus ferrooxidans (strain ATCC 23270)) protein is Protein-export protein SecB.